The sequence spans 677 residues: Regulator of G-protein signaling 9 (677 aa).

The DEP domain maps to P30–T105. The G protein gamma domain occupies V219 to L280. In terms of domain architecture, RGS spans R295–K416. Disordered regions lie at residues S530–L571 and D639–G677.

As to quaternary structure, heterodimer with GNB5. Interacts with RGS7BP, leading to regulate the subcellular location of the heterodimer formed with GNB5. Component of the RGS9-1-Gbeta5 complex composed of RGS9 (RGS9-1), Gbeta5 (GNB5) and RGS9BP. Interacts with PDE6G and GNAT1. As to expression, expressed in the central nervous system. Isoform RGS9L is found in striatum, hypothalamus and nucleus accumbens while isoform RGS9S is expressed in retina and pineal gland.

It is found in the membrane. Its function is as follows. Inhibits signal transduction by increasing the GTPase activity of G protein alpha subunits thereby driving them into their inactive GDP-bound form. Binds to GNAT1. Involved in phototransduction; key element in the recovery phase of visual transduction. In Rattus norvegicus (Rat), this protein is Regulator of G-protein signaling 9 (Rgs9).